The following is a 357-amino-acid chain: tRNA/tmRNA (uracil-C(5))-methyltransferase (357 aa).

The S-adenosyl-L-methionine site is built by glutamine 185, tyrosine 212, asparagine 217, glutamate 233, and aspartate 291. The active-site Nucleophile is cysteine 316. The Proton acceptor role is filled by glutamate 350.

This sequence belongs to the class I-like SAM-binding methyltransferase superfamily. RNA M5U methyltransferase family. TrmA subfamily.

The enzyme catalyses uridine(54) in tRNA + S-adenosyl-L-methionine = 5-methyluridine(54) in tRNA + S-adenosyl-L-homocysteine + H(+). It catalyses the reaction uridine(341) in tmRNA + S-adenosyl-L-methionine = 5-methyluridine(341) in tmRNA + S-adenosyl-L-homocysteine + H(+). Functionally, dual-specificity methyltransferase that catalyzes the formation of 5-methyluridine at position 54 (m5U54) in all tRNAs, and that of position 341 (m5U341) in tmRNA (transfer-mRNA). The chain is tRNA/tmRNA (uracil-C(5))-methyltransferase from Campylobacter hominis (strain ATCC BAA-381 / DSM 21671 / CCUG 45161 / LMG 19568 / NCTC 13146 / CH001A).